We begin with the raw amino-acid sequence, 184 residues long: Ribosome-recycling factor (184 aa).

This sequence belongs to the RRF family.

The protein localises to the cytoplasm. Responsible for the release of ribosomes from messenger RNA at the termination of protein biosynthesis. May increase the efficiency of translation by recycling ribosomes from one round of translation to another. This is Ribosome-recycling factor from Acinetobacter baumannii (strain AB307-0294).